The following is a 331-amino-acid chain: 6-phosphogluconolactonase (331 aa).

The protein belongs to the cycloisomerase 2 family.

It catalyses the reaction 6-phospho-D-glucono-1,5-lactone + H2O = 6-phospho-D-gluconate + H(+). It functions in the pathway carbohydrate degradation; pentose phosphate pathway; D-ribulose 5-phosphate from D-glucose 6-phosphate (oxidative stage): step 2/3. Catalyzes the hydrolysis of 6-phosphogluconolactone to 6-phosphogluconate. In Sodalis glossinidius (strain morsitans), this protein is 6-phosphogluconolactonase.